Here is a 149-residue protein sequence, read N- to C-terminus: Calmodulin-B (149 aa).

A2 bears the N-acetylalanine mark. 4 EF-hand domains span residues 8–43 (EQIA…LGQN), 44–79 (PTEA…KMKE), 81–116 (DSEE…LGEK), and 117–149 (LTDE…MTCK). Ca(2+) is bound by residues D21, D23, D25, T27, E32, D57, D59, N61, T63, E68, D94, D96, N98, and E105. K116 carries the post-translational modification N6,N6,N6-trimethyllysine. The Ca(2+) site is built by D130, D132, D134, Q136, and E141.

This sequence belongs to the calmodulin family.

Its function is as follows. Calmodulin mediates the control of a large number of enzymes, ion channels and other proteins by Ca(2+). Among the enzymes to be stimulated by the calmodulin-Ca(2+) complex are a number of protein kinases and phosphatases. In Halocynthia roretzi (Sea squirt), this protein is Calmodulin-B.